An 83-amino-acid chain; its full sequence is RNA-binding protein Hfq (83 aa).

One can recognise a Sm domain in the interval 9-68; that stretch reads DPYLNILRKERIPVSIFLVNGIKLQGQIESFDQFVILLRNTVSQMVYKHAISTVVPSRNV.

The protein belongs to the Hfq family. As to quaternary structure, homohexamer.

Functionally, RNA chaperone that binds small regulatory RNA (sRNAs) and mRNAs to facilitate mRNA translational regulation in response to envelope stress, environmental stress and changes in metabolite concentrations. Also binds with high specificity to tRNAs. This Chromohalobacter salexigens (strain ATCC BAA-138 / DSM 3043 / CIP 106854 / NCIMB 13768 / 1H11) protein is RNA-binding protein Hfq.